We begin with the raw amino-acid sequence, 502 residues long: Neuronal acetylcholine receptor subunit alpha-7 (502 aa).

Positions 1–22 are cleaved as a signal peptide; the sequence is MRCSPGGVWLALAASLLHVSLQ. The Extracellular portion of the chain corresponds to 23–233; it reads GEFQRKLYKE…VTMRRRTLYY (211 aa). R42 and V44 together coordinate Ca(2+). N-linked (GlcNAc...) asparagine glycosylation is found at N46, N90, and N133. C150 and C164 are disulfide-bonded. Residues S172 and Y210 each coordinate Ca(2+). C212 and C213 are disulfide-bonded. The next 3 membrane-spanning stretches (helical) occupy residues 234-254, 259-279, and 292-315; these read GLNL…VFLL, GEKI…MLLV, and LIAQ…VIVL. The essential for TMEM35A/NACHO-mediated proper subunit assembly and trafficking to cell membrane stretch occupies residues 260–267; sequence EKISLGIT. Over 316–466 the chain is Cytoplasmic; the sequence is QYHHHDPDGG…CSEWKFAACV (151 aa). The chain crosses the membrane as a helical span at residues 467–489; that stretch reads VDRLCLMAFSVFTIICTIGILMS.

Belongs to the ligand-gated ion channel (TC 1.A.9) family. Acetylcholine receptor (TC 1.A.9.1) subfamily. Alpha-7/CHRNA7 sub-subfamily. Homopentamer. Can also form heteropentamers with CHRNB2, mainly found in basal forebrain cholinergic neurons. Interacts with RIC3; which is required for proper folding and assembly. Interacts with LYPD6. Interacts with CANX. In terms of processing, glycosylations at Asn-46, Asn-90 and Asn-133 are essential for TMEM35A/NACHO-mediated proper subunit assembly and trafficking to the cell membrane. As to expression, expressed in neuronal cells. Expressed in macrophages (at protein level).

The protein resides in the postsynaptic cell membrane. Its subcellular location is the cell membrane. It catalyses the reaction Ca(2+)(in) = Ca(2+)(out). The catalysed reaction is K(+)(in) = K(+)(out). It carries out the reaction Na(+)(in) = Na(+)(out). The enzyme catalyses choline(out) = choline(in). It catalyses the reaction NH4(+)(in) = NH4(+)(out). The catalysed reaction is L-arginine(in) = L-arginine(out). It carries out the reaction guanidine(out) = guanidine(in). Its activity is regulated as follows. Activated by a myriad of ligands such as acetylcholine, cytisine, nicotine, choline and epibatidine. Oligomeric amyloid-beta protein 42 activates specifially CHRNA7:CHRNB2 nAchRs. Activity is modulated by positive allosteric modulators (PAMs), such as flavonoids, with a wide range of chemical diversity, pharmacological sensitivity and efficacy. AChR activity is inhibited by the antagonists alpha-conotoxons RgIA, ImI and ImII, small disulfide-constrained peptides from cone snails. Alpha-conotoxin PnIC selectively inhibits CHRNA7:CHRNB2 over CHRNA7 homopentamer. Component of neuronal acetylcholine receptors (nAChRs) that function as pentameric, ligand-gated cation channels with high calcium permeability among other activities. nAChRs are excitatory neurotrasnmitter receptors formed by a collection of nAChR subunits known to mediate synaptic transmission in the nervous system and the neuromuscular junction. Each nAchR subunit confers differential attributes to channel properties, including activation, deactivation and desensitization kinetics, pH sensitivity, cation permeability, and binding to allosteric modulators. CHRNA7 forms homopentameric neuronal acetylcholine receptors abundantly expressed in the central nervous system, characterized by fast desensitization and high calcium permeability. Also forms heteropentamers with CHRNB2, mainly expressed in basal forebrain cholinergic neurons. Involved in the modulation of calcium-dependent signaling pathways and influences the release of neurotransmitters, including dopamine, glutamate and GABA. Also expressed in non-neuronal cells such as immune cells like lymphocytes, monocytes and macrophages. In T cells, activation induces metabotropic signaling that results in an increase of intracellular Ca2+ concentrations, independent of ionotropic receptor functions. In macrophages, required for acetylcholine-mediated inhibition of TNF and other inflammatory cytokine release. Once activated by acetylcholine, nicotine or other agonists, selectively inhibits production of pro-inflammatory cytokines while leaving anti-inflammatory cytokines undisturbed. Stimulates the cholinergic anti-inflammatory pathway, controlling inflammation by inhibiting NFKB nuclear translocation and activating the JAK2-STAT3 pathway, independently of ion channel activity. Also expressed in the urothelium where it modulates reflex bladder activity by increasing intracellular calcium through internal stores and decreasing basal ATP release. This chain is Neuronal acetylcholine receptor subunit alpha-7, found in Homo sapiens (Human).